Consider the following 682-residue polypeptide: DNA ligase (682 aa).

Residues 42 to 46 (DAEYD), 91 to 92 (SL), and Glu124 each bind NAD(+). The active-site N6-AMP-lysine intermediate is the Lys126. NAD(+)-binding residues include Arg147, Glu184, Lys302, and Lys326. 4 residues coordinate Zn(2+): Cys420, Cys423, Cys438, and Cys444. Residues 603 to 682 (IADNPLKGKS…QEFIALTGEN (80 aa)) enclose the BRCT domain.

It belongs to the NAD-dependent DNA ligase family. LigA subfamily. Requires Mg(2+) as cofactor. Mn(2+) is required as a cofactor.

The enzyme catalyses NAD(+) + (deoxyribonucleotide)n-3'-hydroxyl + 5'-phospho-(deoxyribonucleotide)m = (deoxyribonucleotide)n+m + AMP + beta-nicotinamide D-nucleotide.. DNA ligase that catalyzes the formation of phosphodiester linkages between 5'-phosphoryl and 3'-hydroxyl groups in double-stranded DNA using NAD as a coenzyme and as the energy source for the reaction. It is essential for DNA replication and repair of damaged DNA. The sequence is that of DNA ligase from Actinobacillus pleuropneumoniae serotype 3 (strain JL03).